Consider the following 290-residue polypeptide: uncharacterized protein (290 aa).

A coiled-coil region spans residues 161-216; the sequence is SNQREVESLEQLVHEQLNKLNTESKMEFENRKNDTKNEVQQLSARIVELHNLLAVS. The chain crosses the membrane as a helical span at residues 236–256; sequence AGVVMAFTGFLVLVIPFGLGV.

It localises to the mitochondrion membrane. This is an uncharacterized protein from Schizosaccharomyces pombe (strain 972 / ATCC 24843) (Fission yeast).